Reading from the N-terminus, the 452-residue chain is Low-affinity putrescine importer PlaP (452 aa).

Residues Met1–Lys16 are Cytoplasmic-facing. Residues Thr17–Phe37 form a helical membrane-spanning segment. Topologically, residues Asp38–Asp48 are periplasmic. The chain crosses the membrane as a helical span at residues Gly49 to Tyr69. The Cytoplasmic segment spans residues Gly70 to Gly95. Residues Phe96 to Leu116 traverse the membrane as a helical segment. The Periplasmic segment spans residues Ala117–Ala123. Residues Leu124–Phe144 form a helical membrane-spanning segment. Over Asn145–Val158 the chain is Cytoplasmic. A helical membrane pass occupies residues Ile159–Phe179. The Periplasmic portion of the chain corresponds to Glu180–His199. The helical transmembrane segment at Val200 to Ile220 threads the bilayer. Residues Ser221–Ala237 lie on the Cytoplasmic side of the membrane. The helical transmembrane segment at Ile238–Leu258 threads the bilayer. At Tyr259 to Lys283 the chain is on the periplasmic side. A helical transmembrane segment spans residues Ala284–Ala304. Over His305–Asn339 the chain is Cytoplasmic. 2 helical membrane passes run Ile340–Ala360 and Leu361–Phe381. Topologically, residues Trp382 to His394 are cytoplasmic. The helical transmembrane segment at Phe395–Leu415 threads the bilayer. Over Glu416–Glu417 the chain is Periplasmic. A helical membrane pass occupies residues Ser418 to Thr438. Residues Lys439 to Ala452 lie on the Cytoplasmic side of the membrane.

The protein belongs to the amino acid-polyamine-organocation (APC) superfamily.

Its subcellular location is the cell inner membrane. The catalysed reaction is putrescine(in) + H(+)(in) = putrescine(out) + H(+)(out). Putrescine importer. This is Low-affinity putrescine importer PlaP (plaP) from Escherichia coli O157:H7.